The primary structure comprises 917 residues: Coiled-coil domain-containing protein 186 (917 aa).

Disordered regions lie at residues 1-52 (MKIR…SGDE), 97-118 (SCANTDTCPEDSGQIDDFPGGD), and 701-769 (TQRR…SVAV). Residues 33–44 (TTEKTSELRDDS) show a composition bias toward basic and acidic residues. The stretch at 220–736 (RYLQQELTVK…TENGNHDKDI (517 aa)) forms a coiled coil. Residues 722–736 (RKLEQTENGNHDKDI) show a composition bias toward basic and acidic residues. The segment covering 737-748 (SSMGSRSSSSGS) has biased composition (low complexity). A Phosphoserine modification is found at serine 759. Coiled-coil stretches lie at residues 778 to 822 (AMLI…IQSY) and 874 to 913 (KLQAVLEDTLLKNITLKENLQTLGTEIERLIKHQHELEQR).

As to expression, expressed in postnatal germ cells.

The sequence is that of Coiled-coil domain-containing protein 186 (Ccdc186) from Mus musculus (Mouse).